Reading from the N-terminus, the 718-residue chain is Gephyrin (718 aa).

Polar residues predominate over residues 1-19; it reads MSNTLTTERNITNSPTAAQ. Residues 1–26 form a disordered region; the sequence is MSNTLTTERNITNSPTAAQLNEKESG. The interval 31–176 is MPT Mo-transferase; sequence EWIVGVLTTS…LPGSVKAIRE (146 aa). Over residues 222–244 the composition is skewed to low complexity; sequence NQNNQNNNNNNNNNNNNNNNNNS. 2 disordered regions span residues 222–266 and 344–364; these read NQNN…SSYN and TGEN…NDDD. The segment covering 245–254 has biased composition (basic residues); the sequence is HNHHHHHHHS. Residues 260–718 are MPT adenylyltransferase; sequence KRGSSYNMTP…KAILIGPINN (459 aa).

It in the N-terminal section; belongs to the MoaB/Mog family. This sequence in the C-terminal section; belongs to the MoeA family. Homotrimer, homodimer and homooligomer. The cofactor is Mg(2+).

The protein localises to the cell membrane. It is found in the cytoplasm. The protein resides in the cytosol. Its subcellular location is the cytoskeleton. It carries out the reaction molybdopterin + ATP + H(+) = adenylyl-molybdopterin + diphosphate. It catalyses the reaction adenylyl-molybdopterin + molybdate = Mo-molybdopterin + AMP + H(+). The protein operates within cofactor biosynthesis; molybdopterin biosynthesis. In terms of biological role, microtubule-associated protein involved in membrane protein-cytoskeleton interactions. Its function is as follows. Also has a catalytic activity and catalyzes two steps in the biosynthesis of the molybdenum cofactor. In the first step, molybdopterin is adenylated. Subsequently, molybdate is inserted into adenylated molybdopterin and AMP is released. The sequence is that of Gephyrin (gphn) from Dictyostelium discoideum (Social amoeba).